Consider the following 254-residue polypeptide: Insulin-like growth factor-binding protein 4 (254 aa).

The N-terminal stretch at M1 to G21 is a signal peptide. The region spanning E23–L103 is the IGFBP N-terminal domain. 6 disulfides stabilise this stretch: C27-C53, C30-C55, C38-C56, C44-C59, C67-C80, and C74-C100. N-linked (GlcNAc...) asparagine glycosylation occurs at N125. Cystine bridges form between C131/C138, C170/C200, C211/C222, and C224/C245. Positions Q167 to C245 constitute a Thyroglobulin type-1 domain. A Phosphoserine modification is found at S251.

As to quaternary structure, binds IGF2 more than IGF1.

It localises to the secreted. IGF-binding proteins prolong the half-life of the IGFs and have been shown to either inhibit or stimulate the growth promoting effects of the IGFs on cell culture. They alter the interaction of IGFs with their cell surface receptors. The sequence is that of Insulin-like growth factor-binding protein 4 (Igfbp4) from Mus musculus (Mouse).